A 756-amino-acid polypeptide reads, in one-letter code: MNMARNVTDLLALSQQEELVDLPENYPLSTSEDEGDSDGEGKRQKLLEAVSSLGRKNKWKLAERSEASRMVSEFNVTSEGSGEKLVLSDLLGSATALSSVAAVKKQLHRVKSKTLTPPLNKEEADRALREAAFSKTSQMLSRWDPVVLKNRQAEQLIFPMEKEPPAVAPIEHVFTDWKVRTPLEQEVFNLLHKNKQPVTDPLLTPVETASIRAMSLEEAKIRRAELQRMRALQSYYEARARREKRIKSKKYHRALKKGKAKKALKEFEELWKDCPNAALQELEKMEKARMTERMSLKHQGSGKWAKSKAIMAKYDPEARKAMQEQLAKNRELTQKLQVVSESEEEDGCTEEGIVSVSHGMDDLQMNADGVNPWMLSSCNSNAKRGEIKTDPEQMPEFVAHVSSESEGDERPVAEELVLKERSFQERVDPNNAKLMDGQETEDSDSQEVLQKLNKESHQSDNQKVSSEENVLHIQREDLASEKLLVLQRLERAHVLEQQGELSKEEHYPKKGLSRPLLKGDWKEMKPLTNPDASGGKKKKEQMIDLRNLLTANSSPVRSLAVPTIQQLEDEVETDHKQLIREAFAGDDVIREFLKEKREAIETNKPKDLDLSLPGWGEWVGMGLKPSAKKRRRFLIKAPESSPRKDKNLPNVIISEKRNIHAAAHQVRALPHPFTHQQQFERTIQNPIGYMWNTQRTFQKLTVPKVGTKLGHIIKPIKAENVGYCSSTRSDLSILQSSQKCLSRKQQKQLKKLSSAD.

A disordered region spans residues 21–44; it reads DLPENYPLSTSEDEGDSDGEGKRQ. Phosphoserine is present on residues serine 29, serine 31, and serine 37. Coiled-coil stretches lie at residues 215–244 and 316–345; these read SLEE…RREK and PEAR…SEEE. Composition is skewed to basic and acidic residues over residues 419–428 and 452–468; these read KERSFQERVD and LNKE…SSEE. Disordered stretches follow at residues 419 to 468 and 497 to 539; these read KERS…SSEE and QQGE…KKKK. The stretch at 449-476 forms a coiled coil; that stretch reads LQKLNKESHQSDNQKVSSEENVLHIQRE. Serine 554 is subject to Phosphoserine.

It belongs to the UTP14 family. As to expression, expressed predominantly in germ cells of the testis; weakly expressed in brain.

The protein resides in the nucleus. The protein localises to the nucleolus. Functionally, essential for spermatogenesis. May be required specifically for ribosome biogenesis and hence protein synthesis during male meiosis. This chain is U3 small nucleolar RNA-associated protein 14 homolog B (Utp14b), found in Mus musculus (Mouse).